The following is a 122-amino-acid chain: Phosphoribosyl-ATP pyrophosphatase (122 aa).

It belongs to the PRA-PH family.

Its subcellular location is the cytoplasm. It carries out the reaction 1-(5-phospho-beta-D-ribosyl)-ATP + H2O = 1-(5-phospho-beta-D-ribosyl)-5'-AMP + diphosphate + H(+). Its pathway is amino-acid biosynthesis; L-histidine biosynthesis; L-histidine from 5-phospho-alpha-D-ribose 1-diphosphate: step 2/9. The protein is Phosphoribosyl-ATP pyrophosphatase of Cupriavidus metallidurans (strain ATCC 43123 / DSM 2839 / NBRC 102507 / CH34) (Ralstonia metallidurans).